Reading from the N-terminus, the 213-residue chain is Uridine kinase (213 aa).

Residue 15–22 (GASASGKS) participates in ATP binding.

This sequence belongs to the uridine kinase family.

The protein resides in the cytoplasm. The catalysed reaction is uridine + ATP = UMP + ADP + H(+). It carries out the reaction cytidine + ATP = CMP + ADP + H(+). Its pathway is pyrimidine metabolism; CTP biosynthesis via salvage pathway; CTP from cytidine: step 1/3. It participates in pyrimidine metabolism; UMP biosynthesis via salvage pathway; UMP from uridine: step 1/1. This Klebsiella pneumoniae (strain 342) protein is Uridine kinase.